Consider the following 218-residue polypeptide: Large ribosomal subunit protein uL4 (218 aa).

The segment at 55 to 83 is disordered; it reads THATKTRGMVSGGGKKPWKQKGTGRARQG.

It belongs to the universal ribosomal protein uL4 family. In terms of assembly, part of the 50S ribosomal subunit.

Its function is as follows. One of the primary rRNA binding proteins, this protein initially binds near the 5'-end of the 23S rRNA. It is important during the early stages of 50S assembly. It makes multiple contacts with different domains of the 23S rRNA in the assembled 50S subunit and ribosome. Functionally, forms part of the polypeptide exit tunnel. This is Large ribosomal subunit protein uL4 from Bifidobacterium longum (strain DJO10A).